The chain runs to 551 residues: Dihydroxy-acid dehydratase (551 aa).

Residue D78 coordinates Mg(2+). [2Fe-2S] cluster is bound at residue C119. Positions 120 and 121 each coordinate Mg(2+). An N6-carboxylysine modification is found at K121. C191 contributes to the [2Fe-2S] cluster binding site. E441 is a binding site for Mg(2+). The Proton acceptor role is filled by S467.

This sequence belongs to the IlvD/Edd family. Homodimer. [2Fe-2S] cluster serves as cofactor. It depends on Mg(2+) as a cofactor.

The catalysed reaction is (2R)-2,3-dihydroxy-3-methylbutanoate = 3-methyl-2-oxobutanoate + H2O. It catalyses the reaction (2R,3R)-2,3-dihydroxy-3-methylpentanoate = (S)-3-methyl-2-oxopentanoate + H2O. It functions in the pathway amino-acid biosynthesis; L-isoleucine biosynthesis; L-isoleucine from 2-oxobutanoate: step 3/4. Its pathway is amino-acid biosynthesis; L-valine biosynthesis; L-valine from pyruvate: step 3/4. Its function is as follows. Functions in the biosynthesis of branched-chain amino acids. Catalyzes the dehydration of (2R,3R)-2,3-dihydroxy-3-methylpentanoate (2,3-dihydroxy-3-methylvalerate) into 2-oxo-3-methylpentanoate (2-oxo-3-methylvalerate) and of (2R)-2,3-dihydroxy-3-methylbutanoate (2,3-dihydroxyisovalerate) into 2-oxo-3-methylbutanoate (2-oxoisovalerate), the penultimate precursor to L-isoleucine and L-valine, respectively. This is Dihydroxy-acid dehydratase from Pyrococcus furiosus (strain ATCC 43587 / DSM 3638 / JCM 8422 / Vc1).